Reading from the N-terminus, the 581-residue chain is Bifunctional lycopene cyclase/phytoene synthase (581 aa).

The lycopene beta-cyclase stretch occupies residues 1-243 (MGFDYALVHL…IVFGQLAFDN (243 aa)). 7 consecutive transmembrane segments (helical) span residues 3–23 (FDYA…LTLL), 35–55 (KVAF…SYLI), 65–85 (HVII…FFVV), 120–140 (LKRL…WFCV), 152–172 (ILIW…QFII), 173–193 (GLPF…LWIV), and 221–241 (IEEA…QLAF). The interval 250–581 (AFPHLFPDPS…RVLVAWRTLN (332 aa)) is phytoene synthase.

In the N-terminal section; belongs to the lycopene beta-cyclase family. It in the C-terminal section; belongs to the phytoene/squalene synthase family.

The protein localises to the membrane. It catalyses the reaction all-trans-lycopene = gamma-carotene. The enzyme catalyses gamma-carotene = all-trans-beta-carotene. It carries out the reaction 2 (2E,6E,10E)-geranylgeranyl diphosphate = 15-cis-phytoene + 2 diphosphate. It participates in carotenoid biosynthesis; beta-carotene biosynthesis. Its pathway is carotenoid biosynthesis; phytoene biosynthesis; all-trans-phytoene from geranylgeranyl diphosphate: step 1/1. Functionally, bifunctional enzyme that catalyzes the reactions from geranylgeranyl diphosphate to phytoene (phytoene synthase) and lycopene to beta-carotene via the intermediate gamma-carotene (lycopene cyclase). This Leptosphaeria maculans (strain JN3 / isolate v23.1.3 / race Av1-4-5-6-7-8) (Blackleg fungus) protein is Bifunctional lycopene cyclase/phytoene synthase.